An 83-amino-acid polypeptide reads, in one-letter code: Small ribosomal subunit protein eS21 (83 aa).

Belongs to the eukaryotic ribosomal protein eS21 family. Component of the 40S small ribosomal subunit. Interacts with sta.

It is found in the cytoplasm. Its subcellular location is the cytosol. The protein localises to the rough endoplasmic reticulum. This Ceratitis capitata (Mediterranean fruit fly) protein is Small ribosomal subunit protein eS21 (RpS21).